The chain runs to 386 residues: S-adenosylmethionine synthase (386 aa).

ATP is bound at residue His-14. Asp-16 is a Mg(2+) binding site. Glu-42 lines the K(+) pocket. Residues Glu-55 and Gln-101 each contribute to the L-methionine site. Residues 101–111 (QSADIALGVDE) form a flexible loop region. ATP-binding positions include 166–168 (DGK), 233–234 (RF), Asp-242, 248–249 (RK), Ala-265, and Lys-269. Residue Asp-242 participates in L-methionine binding. Lys-273 contributes to the L-methionine binding site.

Belongs to the AdoMet synthase family. As to quaternary structure, homotetramer; dimer of dimers. It depends on Mg(2+) as a cofactor. Requires K(+) as cofactor.

It localises to the cytoplasm. It catalyses the reaction L-methionine + ATP + H2O = S-adenosyl-L-methionine + phosphate + diphosphate. Its pathway is amino-acid biosynthesis; S-adenosyl-L-methionine biosynthesis; S-adenosyl-L-methionine from L-methionine: step 1/1. Functionally, catalyzes the formation of S-adenosylmethionine (AdoMet) from methionine and ATP. The overall synthetic reaction is composed of two sequential steps, AdoMet formation and the subsequent tripolyphosphate hydrolysis which occurs prior to release of AdoMet from the enzyme. The polypeptide is S-adenosylmethionine synthase (Acholeplasma laidlawii (strain PG-8A)).